The following is a 36-amino-acid chain: Photosystem I reaction center subunit VIII (36 aa).

A helical transmembrane segment spans residues 1 to 21 (MITFSFPSIFVPLVGLVFPAI).

Belongs to the PsaI family.

It is found in the plastid. The protein localises to the chloroplast thylakoid membrane. In terms of biological role, may help in the organization of the PsaL subunit. This chain is Photosystem I reaction center subunit VIII, found in Coffea arabica (Arabian coffee).